A 324-amino-acid chain; its full sequence is Cytochrome c biogenesis protein CcsA (324 aa).

8 helical membrane passes run 17 to 37 (IISVVIIIQLMTFFVHEIPAL), 44 to 64 (GMIATFLSITGLLIIRWIYSG), 68 to 88 (LSNLYESLMFLSWSFAIIHMI), 99 to 119 (YLSAITIPSAIFTQAFATSGL), 145 to 165 (MLLSYAALLVGSLFSIALLVI), 230 to 250 (VISIGFSFLTIGILSGAVWAN), 264 to 278 (TWAFITWTIYAIYSH), and 291 to 311 (AIVASIGFFIIWICYFGVNLL).

This sequence belongs to the CcmF/CycK/Ccl1/NrfE/CcsA family. May interact with Ccs1.

Its subcellular location is the plastid. It localises to the chloroplast thylakoid membrane. Required during biogenesis of c-type cytochromes (cytochrome c6 and cytochrome f) at the step of heme attachment. The polypeptide is Cytochrome c biogenesis protein CcsA (Lemna minor (Common duckweed)).